A 287-amino-acid chain; its full sequence is Polyamine aminopropyltransferase (287 aa).

The region spanning 5 to 238 (EIWYETLHAN…GIMTFAWASQ (234 aa)) is the PABS domain. Gln33 is an S-methyl-5'-thioadenosine binding site. Spermidine is bound by residues His64 and Asp88. Residues Glu108 and 140 to 141 (DG) each bind S-methyl-5'-thioadenosine. The Proton acceptor role is filled by Asp158. Position 158 to 161 (158 to 161 (DCTD)) interacts with spermidine. An S-methyl-5'-thioadenosine-binding site is contributed by Pro165.

It belongs to the spermidine/spermine synthase family. Homodimer or homotetramer.

The protein resides in the cytoplasm. It catalyses the reaction S-adenosyl 3-(methylsulfanyl)propylamine + putrescine = S-methyl-5'-thioadenosine + spermidine + H(+). Its pathway is amine and polyamine biosynthesis; spermidine biosynthesis; spermidine from putrescine: step 1/1. Functionally, catalyzes the irreversible transfer of a propylamine group from the amino donor S-adenosylmethioninamine (decarboxy-AdoMet) to putrescine (1,4-diaminobutane) to yield spermidine. This Serratia proteamaculans (strain 568) protein is Polyamine aminopropyltransferase.